Consider the following 515-residue polypeptide: 1-pyrroline-5-carboxylate dehydrogenase (515 aa).

Residues Glu286 and Cys320 contribute to the active site.

This sequence belongs to the aldehyde dehydrogenase family. RocA subfamily.

It catalyses the reaction L-glutamate 5-semialdehyde + NAD(+) + H2O = L-glutamate + NADH + 2 H(+). The protein operates within amino-acid degradation; L-proline degradation into L-glutamate; L-glutamate from L-proline: step 2/2. In Anoxybacillus flavithermus (strain DSM 21510 / WK1), this protein is 1-pyrroline-5-carboxylate dehydrogenase.